We begin with the raw amino-acid sequence, 483 residues long: tRNA sulfurtransferase (483 aa).

The THUMP domain occupies 61–165; sequence EAVCDALTRI…DDKLILVNAR (105 aa). Residues 183 to 184, Lys265, Gly287, and Gln296 contribute to the ATP site; that span reads LI. Residues Cys344 and Cys456 are joined by a disulfide bond. Residues 404–483 enclose the Rhodanese domain; it reads FATNDVVLDI…FNNVKVYRKK (80 aa). Cys456 acts as the Cysteine persulfide intermediate in catalysis.

Belongs to the ThiI family.

It is found in the cytoplasm. The enzyme catalyses [ThiI sulfur-carrier protein]-S-sulfanyl-L-cysteine + a uridine in tRNA + 2 reduced [2Fe-2S]-[ferredoxin] + ATP + H(+) = [ThiI sulfur-carrier protein]-L-cysteine + a 4-thiouridine in tRNA + 2 oxidized [2Fe-2S]-[ferredoxin] + AMP + diphosphate. The catalysed reaction is [ThiS sulfur-carrier protein]-C-terminal Gly-Gly-AMP + S-sulfanyl-L-cysteinyl-[cysteine desulfurase] + AH2 = [ThiS sulfur-carrier protein]-C-terminal-Gly-aminoethanethioate + L-cysteinyl-[cysteine desulfurase] + A + AMP + 2 H(+). Its pathway is cofactor biosynthesis; thiamine diphosphate biosynthesis. Catalyzes the ATP-dependent transfer of a sulfur to tRNA to produce 4-thiouridine in position 8 of tRNAs, which functions as a near-UV photosensor. Also catalyzes the transfer of sulfur to the sulfur carrier protein ThiS, forming ThiS-thiocarboxylate. This is a step in the synthesis of thiazole, in the thiamine biosynthesis pathway. The sulfur is donated as persulfide by IscS. The sequence is that of tRNA sulfurtransferase from Proteus mirabilis (strain HI4320).